The primary structure comprises 102 residues: EPIDERMAL PATTERNING FACTOR-like protein 9 (102 aa).

A signal peptide spans Met-1–Ala-31. Cystine bridges form between Cys-65–Cys-98, Cys-70–Cys-77, and Cys-73–Cys-100.

It belongs to the plant cysteine rich small secretory peptide family. Epidermal patterning factor subfamily. As to quaternary structure, interacts with ERECTA and TMM. As to expression, expressed in immature organs, including leaves, stems and flower buds, but not in roots, shoot apical meristem and petals. Detected in the mesophyll tissues but not in the epidermal tissues where stomata develop.

It localises to the secreted. It is found in the extracellular space. The protein localises to the apoplast. Its function is as follows. Positively regulates stomatal density and patterning. Acts by competing with EPF2 (AC Q8LC53) for the same receptors, ERECTA (AC Q42371) and TMM (AC Q9SSD1). Not cleaved by the protease CRSP (AC Q9LNU1). The chain is EPIDERMAL PATTERNING FACTOR-like protein 9 from Arabidopsis thaliana (Mouse-ear cress).